We begin with the raw amino-acid sequence, 73 residues long: UPF0435 protein lmo1707 (73 aa).

Belongs to the UPF0435 family.

The polypeptide is UPF0435 protein lmo1707 (Listeria monocytogenes serovar 1/2a (strain ATCC BAA-679 / EGD-e)).